A 173-amino-acid polypeptide reads, in one-letter code: Alpha-crystallin A chain (173 aa).

Met1 bears the N-acetylmethionine mark. The interval 1 to 63 (MDVTIQHPWF…RTVLDSGISE (63 aa)) is required for complex formation with BFSP1 and BFSP2. Gln6 bears the Deamidated glutamine; partial mark. Residue Ser45 is modified to Phosphoserine. Gln50 is subject to Deamidated glutamine; partial. Positions 52–162 (LFRTVLDSGI…GHSERAIPVS (111 aa)) constitute a sHSP domain. Residue Lys70 is modified to N6-acetyllysine. Deamidated glutamine; partial is present on Gln90. Residue Lys99 is modified to N6-acetyllysine. Residues His100, Glu102, and His107 each contribute to the Zn(2+) site. Residue Ser122 is modified to Phosphoserine. Asn123 carries the post-translational modification Deamidated asparagine; partial. Residues 145-173 (KVQSGLDAGHSERAIPVSREEKPSSAPSS) form a disordered region. At Gln147 the chain carries Deamidated glutamine; partial. Basic and acidic residues predominate over residues 153-167 (GHSERAIPVSREEKP). Position 154 (His154) interacts with Zn(2+). A glycan (O-linked (GlcNAc) serine) is linked at Ser162.

Belongs to the small heat shock protein (HSP20) family. In terms of assembly, heteromer composed of three CRYAA and one CRYAB subunits. Inter-subunit bridging via zinc ions enhances stability, which is crucial as there is no protein turn over in the lens. Can also form homodimers and homotetramers (dimers of dimers) which serve as the building blocks of homooligomers. Within homooligomers, the zinc-binding motif is created from residues of 3 different molecules. His-100 and Glu-102 from one molecule are ligands of the zinc ion, and His-107 and His-154 residues from additional molecules complete the site with tetrahedral coordination geometry. Part of a complex required for lens intermediate filament formation composed of BFSP1, BFSP2 and CRYAA. In terms of processing, acetylation at Lys-70 may increase chaperone activity. Undergoes age-dependent proteolytical cleavage at the C-terminus.

The protein localises to the cytoplasm. It is found in the nucleus. Contributes to the transparency and refractive index of the lens. Acts as a chaperone, preventing aggregation of various proteins under a wide range of stress conditions. Required for the correct formation of lens intermediate filaments as part of a complex composed of BFSP1, BFSP2 and CRYAA. This chain is Alpha-crystallin A chain (CRYAA), found in Ochotona princeps (Southern American pika).